The following is a 122-amino-acid chain: Large ribosomal subunit protein uL14 (122 aa).

Belongs to the universal ribosomal protein uL14 family. In terms of assembly, part of the 50S ribosomal subunit. Forms a cluster with proteins L3 and L19. In the 70S ribosome, L14 and L19 interact and together make contacts with the 16S rRNA in bridges B5 and B8.

Functionally, binds to 23S rRNA. Forms part of two intersubunit bridges in the 70S ribosome. This is Large ribosomal subunit protein uL14 from Acidothermus cellulolyticus (strain ATCC 43068 / DSM 8971 / 11B).